The following is a 109-amino-acid chain: Nucleoid-associated protein CKO_02678 (109 aa).

The interval 89–109 is disordered; that stretch reads KEKMASVSSGMQLPPGFKMPF.

The protein belongs to the YbaB/EbfC family. Homodimer.

The protein localises to the cytoplasm. The protein resides in the nucleoid. Functionally, binds to DNA and alters its conformation. May be involved in regulation of gene expression, nucleoid organization and DNA protection. This Citrobacter koseri (strain ATCC BAA-895 / CDC 4225-83 / SGSC4696) protein is Nucleoid-associated protein CKO_02678.